Reading from the N-terminus, the 418-residue chain is uncharacterized protein (418 aa).

The span at 282–297 shows a compositional bias: basic and acidic residues; sequence EEHSSIAKLDSEEKIR. The disordered stretch occupies residues 282–346; that stretch reads EEHSSIAKLD…SASVDDVSEE (65 aa). Residues 304 to 316 are compositionally biased toward low complexity; sequence SSTSLSPDPTSDN. Over residues 322–337 the composition is skewed to polar residues; that stretch reads WVSSQDTSKNSSNLAS.

This is an uncharacterized protein from Schizosaccharomyces pombe (strain 972 / ATCC 24843) (Fission yeast).